Consider the following 570-residue polypeptide: Urease subunit alpha (570 aa).

Histidine 137, histidine 139, and lysine 220 together coordinate Ni(2+). Lysine 220 carries the N6-carboxylysine modification. Residue histidine 222 participates in substrate binding. 2 residues coordinate Ni(2+): histidine 249 and histidine 275. The active-site Proton donor is the histidine 323. Residue aspartate 363 coordinates Ni(2+).

It belongs to the metallo-dependent hydrolases superfamily. Urease alpha subunit family. Heterotrimer of UreA (gamma), UreB (beta) and UreC (alpha) subunits. Three heterotrimers associate to form the active enzyme. Ni cation is required as a cofactor. In terms of processing, carboxylation allows a single lysine to coordinate two nickel ions.

The protein localises to the cytoplasm. It carries out the reaction urea + 2 H2O + H(+) = hydrogencarbonate + 2 NH4(+). Its pathway is nitrogen metabolism; urea degradation; CO(2) and NH(3) from urea (urease route): step 1/1. This is Urease subunit alpha from Lachnoclostridium phytofermentans (strain ATCC 700394 / DSM 18823 / ISDg) (Clostridium phytofermentans).